The sequence spans 739 residues: Phosphoribosylformylglycinamidine synthase subunit PurL (739 aa).

Histidine 54 is a catalytic residue. Positions 57 and 96 each coordinate ATP. Mg(2+) is bound at residue glutamate 98. Residues 99 to 102 and arginine 121 each bind substrate; that span reads SHNH. The active-site Proton acceptor is the histidine 100. Residue aspartate 122 coordinates Mg(2+). Glutamine 245 contributes to the substrate binding site. Residue aspartate 275 participates in Mg(2+) binding. 319–321 contributes to the substrate binding site; that stretch reads ESQ. Residues aspartate 504 and glycine 541 each contribute to the ATP site. Residue asparagine 542 participates in Mg(2+) binding. Residue serine 544 coordinates substrate.

The protein belongs to the FGAMS family. Monomer. Part of the FGAM synthase complex composed of 1 PurL, 1 PurQ and 2 PurS subunits.

It localises to the cytoplasm. It catalyses the reaction N(2)-formyl-N(1)-(5-phospho-beta-D-ribosyl)glycinamide + L-glutamine + ATP + H2O = 2-formamido-N(1)-(5-O-phospho-beta-D-ribosyl)acetamidine + L-glutamate + ADP + phosphate + H(+). Its pathway is purine metabolism; IMP biosynthesis via de novo pathway; 5-amino-1-(5-phospho-D-ribosyl)imidazole from N(2)-formyl-N(1)-(5-phospho-D-ribosyl)glycinamide: step 1/2. Functionally, part of the phosphoribosylformylglycinamidine synthase complex involved in the purines biosynthetic pathway. Catalyzes the ATP-dependent conversion of formylglycinamide ribonucleotide (FGAR) and glutamine to yield formylglycinamidine ribonucleotide (FGAM) and glutamate. The FGAM synthase complex is composed of three subunits. PurQ produces an ammonia molecule by converting glutamine to glutamate. PurL transfers the ammonia molecule to FGAR to form FGAM in an ATP-dependent manner. PurS interacts with PurQ and PurL and is thought to assist in the transfer of the ammonia molecule from PurQ to PurL. This Lactococcus lactis subsp. lactis (strain IL1403) (Streptococcus lactis) protein is Phosphoribosylformylglycinamidine synthase subunit PurL.